A 467-amino-acid chain; its full sequence is Dihydroorotase (467 aa).

2 residues coordinate Zn(2+): His60 and His62. Substrate is bound by residues 62-64 (HFR) and Asn94. Residues Glu146, His180, His234, and Asp313 each contribute to the Zn(2+) site. Asp313 is a catalytic residue. Residue His317 coordinates substrate. The tract at residues 439–467 (KPGRGEFLEGSGKRSEEDEEENSEETGSD) is disordered. Residues 441-454 (GRGEFLEGSGKRSE) show a composition bias toward basic and acidic residues. Positions 455 to 467 (EDEEENSEETGSD) are enriched in acidic residues.

It belongs to the metallo-dependent hydrolases superfamily. DHOase family. Class I DHOase subfamily. Requires Zn(2+) as cofactor.

It carries out the reaction (S)-dihydroorotate + H2O = N-carbamoyl-L-aspartate + H(+). It participates in pyrimidine metabolism; UMP biosynthesis via de novo pathway; (S)-dihydroorotate from bicarbonate: step 3/3. Catalyzes the reversible cyclization of carbamoyl aspartate to dihydroorotate. In Methanosarcina acetivorans (strain ATCC 35395 / DSM 2834 / JCM 12185 / C2A), this protein is Dihydroorotase.